The sequence spans 850 residues: Transforming growth factor beta receptor type 3 (850 aa).

The signal sequence occupies residues 1–22 (MAVTSHHMVPVFVLMSACLATA). Topologically, residues 23–785 (GPEPSTRCEL…QIFHGLDTLT (763 aa)) are extracellular. Cysteines 54 and 199 form a disulfide. Asparagine 143 and asparagine 491 each carry an N-linked (GlcNAc...) asparagine glycan. The region spanning 454–728 (KCDNEKMVVA…PKCVTPDDAC (275 aa)) is the ZP domain. Positions 528–557 (SPGDSSGWPDGYEDLESGDNGFPGDTDEGE) are disordered. 2 O-linked (Xyl...) (glycosaminoglycan) serine glycosylation sites follow: serine 533 and serine 544. N-linked (GlcNAc...) asparagine glycosylation is found at asparagine 570, asparagine 589, and asparagine 696. 3 disulfide bridges follow: cysteine 638-cysteine 704, cysteine 659-cysteine 728, and cysteine 709-cysteine 721. Positions 735-749 (MIWTMMQNKKTFTKP) are interaction with TGF-beta ligand. A helical membrane pass occupies residues 786-808 (VMGIAFAAFVIGALLTGALWYIY). The Cytoplasmic segment spans residues 809–850 (SHTGETARRQQVPTSPPASENSSAAHSIGSTQSTPCSSSSTA). The segment covering 817–833 (RQQVPTSPPASENSSAA) has biased composition (polar residues). Residues 817–850 (RQQVPTSPPASENSSAAHSIGSTQSTPCSSSSTA) form a disordered region. The segment covering 835-850 (SIGSTQSTPCSSSSTA) has biased composition (low complexity). Threonine 839 is subject to Phosphothreonine.

As to quaternary structure, forms homodimers and homooligomers. Interacts with DYNLT4. Interacts with integrin ITGA5:ITGB1; this interaction promotes the internalization and trafficking of ITGA5:ITGB1 into endocytic vesicles. Interacts with TGFB1, BMP2, BMP5, BMP7 or GDF5 and inhibin A via the ligand binding domains. Interacts with ALK3/BMPR1A; this interaction results in the cell surface retention of BMPR1A. Interacts with ALK6/BMPR1B; this interaction enhances BMPR1B-mediated stimulation of the BMP signaling pathway. Interacts with the scaffolding protein beta-arrestin2/ARRB2; this interaction mediates internalization of TGFBR3 and thus regulates migration, actin cytoskeleton and activation of CDC42. Post-translationally, extensively modified by glycosaminoglycan groups (GAG). Phosphorylated in the cytoplasmic domain by the type II receptor TGFBR2 at THR-839 to mediate recruitment of ARRB2 and subsequent internalization of TGFBR2 and TGFBR3.

The protein resides in the cell membrane. It is found in the secreted. It localises to the extracellular space. The protein localises to the extracellular matrix. Cell surface receptor that regulates diverse cellular processes including cell proliferation, differentiation, migration, and apoptosis. Initiates BMP, inhibin, and TGF-beta signaling pathways by interacting with different ligands including TGFB1, BMP2, BMP5, BMP7 or GDF5. Alternatively, acts as a cell surface coreceptor for BMP ligands, serving to enhance ligand binding by differentially regulating BMPR1A/ALK3 and BMPR1B/ALK6 receptor trafficking. Promotes epithelial cell adhesion, focal adhesion formation and integrin signaling during epithelial cell spreading on fibronectin. By interacting with the scaffolding protein beta-arrestin2/ARRB2, regulates migration or actin cytoskeleton and promotes the activation of CDC42 as well as the inhibition of NF-kappa-B. In gonadotrope cells, acts as an inhibin A coreceptor and regulates follicle-stimulating hormone (FSH) levels and female fertility. Plays a role in the inhibition of directed and random cell migration in epithelial cells by altering the actin cytoskeletal organization. Participates in epithelial-mesenchymal transformation (EMT) upon binding to BMP2 or TGFB2, by activating the PAR6/SMURF1/RHOA pathway. In Mus musculus (Mouse), this protein is Transforming growth factor beta receptor type 3 (Tgfbr3).